Reading from the N-terminus, the 823-residue chain is Dimethyl sulfoxide/trimethylamine N-oxide reductase (823 aa).

The tat-type signal signal peptide spans 1–42; sequence MTKFSGNELRAELYRRAFLSYSVAPGALGMFGRSLLAKGARA. Residues 156–160, Trp158, Ser189, 232–233, 262–263, 283–285, 364–365, Arg368, Asn476, His480, 500–501, Arg523, Asp553, 685–686, 691–693, Asn779, and 796–797 contribute to the Mo-bis(molybdopterin guanine dinucleotide) site; these read YGWKS, KT, ID, QTD, WS, HD, HP, HSQ, and GQ.

As to quaternary structure, homodimer. Mo-bis(molybdopterin guanine dinucleotide) is required as a cofactor. In terms of processing, predicted to be exported by the Tat system. The position of the signal peptide cleavage has been experimentally proven.

It localises to the periplasm. It carries out the reaction dimethyl sulfide + a menaquinone + H2O = dimethyl sulfoxide + a menaquinol. It catalyses the reaction trimethylamine + 2 Fe(III)-[cytochrome c] + H2O = trimethylamine N-oxide + 2 Fe(II)-[cytochrome c] + 3 H(+). Catalyzes the reduction of dimethyl sulfoxide (DMSO) and trimethylamine N-oxide (TMAO) to dimethyl sulfide (DMS) and trimethylamine, respectively. The terminal DMSO reductase can also use various sulfoxides and N-oxide compounds as terminal electron acceptor in addition to DMSO and TMAO. This chain is Dimethyl sulfoxide/trimethylamine N-oxide reductase (dorA), found in Rhodobacter capsulatus (Rhodopseudomonas capsulata).